Reading from the N-terminus, the 80-residue chain is MPTKKNNFEEQLNELEKIVTNLENGNVPLEDALKEFQEGVKISRDLDKKLTNAEQTVAKLIDSDGTEHNLDPNNASAPEE.

The interval 60–80 (LIDSDGTEHNLDPNNASAPEE) is disordered. Over residues 61-70 (IDSDGTEHNL) the composition is skewed to basic and acidic residues. The span at 71 to 80 (DPNNASAPEE) shows a compositional bias: polar residues.

The protein belongs to the XseB family. Heterooligomer composed of large and small subunits.

The protein resides in the cytoplasm. The catalysed reaction is Exonucleolytic cleavage in either 5'- to 3'- or 3'- to 5'-direction to yield nucleoside 5'-phosphates.. Bidirectionally degrades single-stranded DNA into large acid-insoluble oligonucleotides, which are then degraded further into small acid-soluble oligonucleotides. The sequence is that of Exodeoxyribonuclease 7 small subunit from Lactobacillus acidophilus (strain ATCC 700396 / NCK56 / N2 / NCFM).